The sequence spans 315 residues: DNA-directed RNA polymerase subunit alpha (315 aa).

Residues 1–228 are alpha N-terminal domain (alpha-NTD); it reads MLEIEKPVIQ…EHFKLFMTLT (228 aa). Residues 245-315 are alpha C-terminal domain (alpha-CTD); it reads KEKALEMTIE…LGLNLRLNDE (71 aa).

The protein belongs to the RNA polymerase alpha chain family. Homodimer. The RNAP catalytic core consists of 2 alpha, 1 beta, 1 beta' and 1 omega subunit. When a sigma factor is associated with the core the holoenzyme is formed, which can initiate transcription.

It carries out the reaction RNA(n) + a ribonucleoside 5'-triphosphate = RNA(n+1) + diphosphate. In terms of biological role, DNA-dependent RNA polymerase catalyzes the transcription of DNA into RNA using the four ribonucleoside triphosphates as substrates. The sequence is that of DNA-directed RNA polymerase subunit alpha from Clostridium perfringens (strain ATCC 13124 / DSM 756 / JCM 1290 / NCIMB 6125 / NCTC 8237 / Type A).